The sequence spans 283 residues: Bifunctional protein FolD (283 aa).

Residues 164–166 (GRS), S189, and I230 each bind NADP(+).

Belongs to the tetrahydrofolate dehydrogenase/cyclohydrolase family. Homodimer.

It catalyses the reaction (6R)-5,10-methylene-5,6,7,8-tetrahydrofolate + NADP(+) = (6R)-5,10-methenyltetrahydrofolate + NADPH. It carries out the reaction (6R)-5,10-methenyltetrahydrofolate + H2O = (6R)-10-formyltetrahydrofolate + H(+). Its pathway is one-carbon metabolism; tetrahydrofolate interconversion. In terms of biological role, catalyzes the oxidation of 5,10-methylenetetrahydrofolate to 5,10-methenyltetrahydrofolate and then the hydrolysis of 5,10-methenyltetrahydrofolate to 10-formyltetrahydrofolate. This chain is Bifunctional protein FolD, found in Lactobacillus delbrueckii subsp. bulgaricus (strain ATCC 11842 / DSM 20081 / BCRC 10696 / JCM 1002 / NBRC 13953 / NCIMB 11778 / NCTC 12712 / WDCM 00102 / Lb 14).